Consider the following 206-residue polypeptide: Large ribosomal subunit protein uL4 (206 aa).

The interval 63–96 (MYKQKGTGRARHHSARAPQFRGGGKAHGPVVRSH) is disordered. The segment covering 64 to 77 (YKQKGTGRARHHSA) has biased composition (basic residues).

The protein belongs to the universal ribosomal protein uL4 family. As to quaternary structure, part of the 50S ribosomal subunit.

In terms of biological role, one of the primary rRNA binding proteins, this protein initially binds near the 5'-end of the 23S rRNA. It is important during the early stages of 50S assembly. It makes multiple contacts with different domains of the 23S rRNA in the assembled 50S subunit and ribosome. Forms part of the polypeptide exit tunnel. The sequence is that of Large ribosomal subunit protein uL4 from Allorhizobium ampelinum (strain ATCC BAA-846 / DSM 112012 / S4) (Agrobacterium vitis (strain S4)).